The primary structure comprises 264 residues: tRNA pseudouridine synthase A (264 aa).

The active-site Nucleophile is the Asp-51. Residue Tyr-109 participates in substrate binding.

Belongs to the tRNA pseudouridine synthase TruA family. As to quaternary structure, homodimer.

It catalyses the reaction uridine(38/39/40) in tRNA = pseudouridine(38/39/40) in tRNA. In terms of biological role, formation of pseudouridine at positions 38, 39 and 40 in the anticodon stem and loop of transfer RNAs. In Vibrio vulnificus (strain CMCP6), this protein is tRNA pseudouridine synthase A.